A 364-amino-acid chain; its full sequence is Methylthioribose-1-phosphate isomerase (364 aa).

Aspartate 254 serves as the catalytic Proton donor.

This sequence belongs to the eIF-2B alpha/beta/delta subunits family. MtnA subfamily.

Its subcellular location is the cytoplasm. The protein localises to the nucleus. The catalysed reaction is 5-(methylsulfanyl)-alpha-D-ribose 1-phosphate = 5-(methylsulfanyl)-D-ribulose 1-phosphate. It functions in the pathway amino-acid biosynthesis; L-methionine biosynthesis via salvage pathway; L-methionine from S-methyl-5-thio-alpha-D-ribose 1-phosphate: step 1/6. Catalyzes the interconversion of methylthioribose-1-phosphate (MTR-1-P) into methylthioribulose-1-phosphate (MTRu-1-P). The polypeptide is Methylthioribose-1-phosphate isomerase (Drosophila melanogaster (Fruit fly)).